Reading from the N-terminus, the 207-residue chain is Probable nicotinate-nucleotide adenylyltransferase (207 aa).

This sequence belongs to the NadD family.

The enzyme catalyses nicotinate beta-D-ribonucleotide + ATP + H(+) = deamido-NAD(+) + diphosphate. The protein operates within cofactor biosynthesis; NAD(+) biosynthesis; deamido-NAD(+) from nicotinate D-ribonucleotide: step 1/1. Its function is as follows. Catalyzes the reversible adenylation of nicotinate mononucleotide (NaMN) to nicotinic acid adenine dinucleotide (NaAD). The chain is Probable nicotinate-nucleotide adenylyltransferase from Synechococcus sp. (strain JA-3-3Ab) (Cyanobacteria bacterium Yellowstone A-Prime).